The primary structure comprises 224 residues: LexA repressor (224 aa).

A DNA-binding region (H-T-H motif) is located at residues 31–51 (RAEIAAELGFKSANAAEEHLQ). Catalysis depends on for autocatalytic cleavage activity residues S142 and K179.

This sequence belongs to the peptidase S24 family. As to quaternary structure, homodimer.

The enzyme catalyses Hydrolysis of Ala-|-Gly bond in repressor LexA.. In terms of biological role, represses a number of genes involved in the response to DNA damage (SOS response), including recA and lexA. In the presence of single-stranded DNA, RecA interacts with LexA causing an autocatalytic cleavage which disrupts the DNA-binding part of LexA, leading to derepression of the SOS regulon and eventually DNA repair. This is LexA repressor from Acidovorax ebreus (strain TPSY) (Diaphorobacter sp. (strain TPSY)).